Consider the following 126-residue polypeptide: Large-conductance mechanosensitive channel (126 aa).

Transmembrane regions (helical) follow at residues 14–34 (VLDLAVGVIIGGAFTGIVKSL) and 69–89 (GAFLNDVINFLITAFVVFLLV).

This sequence belongs to the MscL family. As to quaternary structure, homopentamer.

Its subcellular location is the cell membrane. Channel that opens in response to stretch forces in the membrane lipid bilayer. May participate in the regulation of osmotic pressure changes within the cell. This is Large-conductance mechanosensitive channel from Leuconostoc citreum (strain KM20).